A 163-amino-acid polypeptide reads, in one-letter code: UPF0587 protein CG4646 (163 aa).

The Zn(2+) site is built by Cys-33, Cys-36, Cys-68, and Cys-71.

This sequence belongs to the UPF0587 family.

The polypeptide is UPF0587 protein CG4646 (Drosophila melanogaster (Fruit fly)).